We begin with the raw amino-acid sequence, 476 residues long: Aspartyl/glutamyl-tRNA(Asn/Gln) amidotransferase subunit B (476 aa).

This sequence belongs to the GatB/GatE family. GatB subfamily. In terms of assembly, heterotrimer of A, B and C subunits.

The enzyme catalyses L-glutamyl-tRNA(Gln) + L-glutamine + ATP + H2O = L-glutaminyl-tRNA(Gln) + L-glutamate + ADP + phosphate + H(+). It catalyses the reaction L-aspartyl-tRNA(Asn) + L-glutamine + ATP + H2O = L-asparaginyl-tRNA(Asn) + L-glutamate + ADP + phosphate + 2 H(+). Its function is as follows. Allows the formation of correctly charged Asn-tRNA(Asn) or Gln-tRNA(Gln) through the transamidation of misacylated Asp-tRNA(Asn) or Glu-tRNA(Gln) in organisms which lack either or both of asparaginyl-tRNA or glutaminyl-tRNA synthetases. The reaction takes place in the presence of glutamine and ATP through an activated phospho-Asp-tRNA(Asn) or phospho-Glu-tRNA(Gln). This Lactobacillus johnsonii (strain CNCM I-12250 / La1 / NCC 533) protein is Aspartyl/glutamyl-tRNA(Asn/Gln) amidotransferase subunit B.